Here is a 191-residue protein sequence, read N- to C-terminus: Calcium-activated potassium channel subunit beta-1 (191 aa).

Residues 1-15 (MGKKLVMAQKRGETR) lie on the Cytoplasmic side of the membrane. Residues 16–36 (ALCLGVAMVMCAVITYYILGT) traverse the membrane as a helical segment. Topologically, residues 37–157 (TMLPLYQKSV…YQRLYGPQAL (121 aa)) are extracellular. Residues N80 and N142 are each glycosylated (N-linked (GlcNAc...) asparagine). Residues 158–178 (LASLFWPTFLLTGGLLIIAMV) traverse the membrane as a helical segment. Topologically, residues 179–191 (KINRSLSILAAQK) are cytoplasmic.

Belongs to the KCNMB (TC 8.A.14.1) family. KCNMB1 subfamily. Interacts with KCNMA1 tetramer. There are probably 4 molecules of KCMNB1 per KCNMA1 tetramer. Post-translationally, N-glycosylated.

The protein resides in the membrane. In terms of biological role, regulatory subunit of the calcium activated potassium KCNMA1 (maxiK) channel. Modulates the calcium sensitivity and gating kinetics of KCNMA1, thereby contributing to KCNMA1 channel diversity. Increases the apparent Ca(2+)/voltage sensitivity of the KCNMA1 channel. It also modifies KCNMA1 channel kinetics and alters its pharmacological properties. It slows down the activation and the deactivation kinetics of the channel. Acts as a negative regulator of smooth muscle contraction by enhancing the calcium sensitivity to KCNMA1. Its presence is also a requirement for internal binding of the KCNMA1 channel opener dehydrosoyasaponin I (DHS-1) triterpene glycoside and for external binding of the agonist hormone 17-beta-estradiol (E2). Increases the binding activity of charybdotoxin (CTX) toxin to KCNMA1 peptide blocker by increasing the CTX association rate and decreasing the dissociation rate. This is Calcium-activated potassium channel subunit beta-1 (KCNMB1) from Oryctolagus cuniculus (Rabbit).